Here is a 279-residue protein sequence, read N- to C-terminus: Probable diacylglycerol pyrophosphate phosphatase 1 (279 aa).

The Lumenal segment spans residues Met-1–Asp-17. A helical transmembrane segment spans residues Tyr-18 to Phe-38. Residues Thr-39–Gln-58 are Cytoplasmic-facing. The helical transmembrane segment at Val-59–Phe-79 threads the bilayer. At Gly-80–Ser-86 the chain is on the lumenal side. The chain crosses the membrane as a helical span at residues Leu-87–Val-107. Topologically, residues Ser-108–Thr-163 are cytoplasmic. The segment at Lys-111–Pro-119 is phosphatase sequence motif I. The segment at Pro-159–His-162 is phosphatase sequence motif II. Residues Ser-164 to Phe-184 form a helical membrane-spanning segment. Residues Arg-185–Lys-187 are Lumenal-facing. A helical transmembrane segment spans residues Thr-188–Leu-208. At Ser-209–Asp-220 the chain is on the cytoplasmic side. The interval Ser-209–Asp-220 is phosphatase sequence motif III. Residues Ile-221–Pro-241 traverse the membrane as a helical segment. Topologically, residues Pro-242–Val-279 are lumenal.

It belongs to the PA-phosphatase related phosphoesterase family.

It localises to the vacuole membrane. Its subcellular location is the endoplasmic reticulum membrane. The enzyme catalyses a 1,2-diacyl-sn-glycerol 3-diphosphate + H2O = a 1,2-diacyl-sn-glycero-3-phosphate + phosphate + H(+). The catalysed reaction is a 1,2-diacyl-sn-glycero-3-phosphate + H2O = a 1,2-diacyl-sn-glycerol + phosphate. Its function is as follows. Catalyzes the dephosphorylation of diacylglycerol phosphate (DGPP) to phosphatidate (PA) and the subsequent dephosphorylation of PA to diacylglycerol (DAG). In Schizosaccharomyces pombe (strain 972 / ATCC 24843) (Fission yeast), this protein is Probable diacylglycerol pyrophosphate phosphatase 1 (dpp1).